Here is an 882-residue protein sequence, read N- to C-terminus: DNA mismatch repair protein MutS (882 aa).

Position 640–647 (640–647) interacts with ATP; that stretch reads GPNMGGKS.

It belongs to the DNA mismatch repair MutS family.

Functionally, this protein is involved in the repair of mismatches in DNA. It is possible that it carries out the mismatch recognition step. This protein has a weak ATPase activity. This is DNA mismatch repair protein MutS from Albidiferax ferrireducens (strain ATCC BAA-621 / DSM 15236 / T118) (Rhodoferax ferrireducens).